The primary structure comprises 329 residues: Malate dehydrogenase (329 aa).

12–18 lines the NAD(+) pocket; that stretch reads GAAGQIG. The substrate site is built by arginine 95 and arginine 101. NAD(+) contacts are provided by residues asparagine 108, glutamine 115, and 132 to 134; that span reads VGN. Substrate is bound by residues asparagine 134 and arginine 165. Histidine 190 (proton acceptor) is an active-site residue.

Belongs to the LDH/MDH superfamily. MDH type 2 family. In terms of assembly, homodimer.

The enzyme catalyses (S)-malate + NAD(+) = oxaloacetate + NADH + H(+). Its activity is regulated as follows. Substrate inhibition is observed at high concentrations of oxaloacetate. In terms of biological role, catalyzes the reversible oxidation of malate to oxaloacetate. Catalyzes the reduction of oxaloacetate more efficiently than the oxidation of malate. This is Malate dehydrogenase from Syntrophobacter fumaroxidans (strain DSM 10017 / MPOB).